Reading from the N-terminus, the 131-residue chain is uncharacterized protein (131 aa).

Positions 14–130 constitute an MSP domain; it reads FLLIYSSLEV…RRLPASFLST (117 aa).

This is an uncharacterized protein from Caenorhabditis elegans.